A 608-amino-acid chain; its full sequence is Elongation factor 4 (608 aa).

One can recognise a tr-type G domain in the interval 11 to 193 (SKIRNFSIIA…QIVEKVPAPD (183 aa)). GTP contacts are provided by residues 23 to 28 (DHGKST) and 140 to 143 (NKID).

This sequence belongs to the TRAFAC class translation factor GTPase superfamily. Classic translation factor GTPase family. LepA subfamily.

It is found in the cell membrane. The catalysed reaction is GTP + H2O = GDP + phosphate + H(+). Its function is as follows. Required for accurate and efficient protein synthesis under certain stress conditions. May act as a fidelity factor of the translation reaction, by catalyzing a one-codon backward translocation of tRNAs on improperly translocated ribosomes. Back-translocation proceeds from a post-translocation (POST) complex to a pre-translocation (PRE) complex, thus giving elongation factor G a second chance to translocate the tRNAs correctly. Binds to ribosomes in a GTP-dependent manner. The polypeptide is Elongation factor 4 (Bacillus cytotoxicus (strain DSM 22905 / CIP 110041 / 391-98 / NVH 391-98)).